The following is a 102-amino-acid chain: Small ribosomal subunit protein uS10 (102 aa).

This sequence belongs to the universal ribosomal protein uS10 family. Part of the 30S ribosomal subunit.

In terms of biological role, involved in the binding of tRNA to the ribosomes. This Methanothrix thermoacetophila (strain DSM 6194 / JCM 14653 / NBRC 101360 / PT) (Methanosaeta thermophila) protein is Small ribosomal subunit protein uS10.